The sequence spans 565 residues: Potassium-transporting ATPase potassium-binding subunit (565 aa).

Helical transmembrane passes span 6–26 (LMLL…LGSL), 63–83 (LLAI…LLMA), 132–152 (GLGV…FALI), 175–195 (LYVL…QGVI), 250–270 (LSNL…CFAF), 283–303 (LLWT…YAEL), 327–347 (FGIL…CGAV), 354–374 (FTAL…VVFG), 379–399 (GLYG…LMIG), 418–438 (ALAI…ALLC), 483–503 (LLLA…VMAI), and 524–544 (GALF…LTFI).

The protein belongs to the KdpA family. In terms of assembly, the system is composed of three essential subunits: KdpA, KdpB and KdpC.

It is found in the cell inner membrane. Part of the high-affinity ATP-driven potassium transport (or Kdp) system, which catalyzes the hydrolysis of ATP coupled with the electrogenic transport of potassium into the cytoplasm. This subunit binds the periplasmic potassium ions and delivers the ions to the membrane domain of KdpB through an intramembrane tunnel. The polypeptide is Potassium-transporting ATPase potassium-binding subunit (Edwardsiella ictaluri (strain 93-146)).